A 131-amino-acid polypeptide reads, in one-letter code: Small ribosomal subunit protein bS6 (131 aa).

A disordered region spans residues 96–131 (VTAPSPMMKEEKSKSLLAKDEAAAPAPAPATEQATA). Residues 103 to 117 (MKEEKSKSLLAKDEA) are compositionally biased toward basic and acidic residues. Low complexity predominate over residues 118–131 (AAPAPAPATEQATA).

Belongs to the bacterial ribosomal protein bS6 family.

Binds together with bS18 to 16S ribosomal RNA. The polypeptide is Small ribosomal subunit protein bS6 (Methylobacillus flagellatus (strain ATCC 51484 / DSM 6875 / VKM B-1610 / KT)).